Consider the following 924-residue polypeptide: DNA repair and recombination protein RDH54 (924 aa).

Residues M1–P10 are compositionally biased toward basic and acidic residues. Disordered stretches follow at residues M1–K21 and E155–G183. Residues T168–T178 are compositionally biased toward low complexity. The region spanning L299–G487 is the Helicase ATP-binding domain. I346 to K353 provides a ligand contact to ATP. The DEGH box signature appears at N472–N475. K615 is covalently cross-linked (Glycyl lysine isopeptide (Lys-Gly) (interchain with G-Cter in ubiquitin)). In terms of domain architecture, Helicase C-terminal spans K631–S790.

Belongs to the SNF2/RAD54 helicase family. In terms of assembly, interacts with RAD51 and DMC1.

Its subcellular location is the nucleus. It carries out the reaction ATP + H2O = ADP + phosphate + H(+). Involved in the recombinational repair of double-strand breaks (DSB) in DNA during mitosis and meiosis. Has DNA dependent ATPase activity. Promotes D-loop (displacement loop) formation with RAD51 recombinase. Modifies the topology of double-stranded DNA during the D-loop reaction to facilitate the invasion of the homologous duplex molecule by the initiating single-stranded DNA substrate. Required for adaptation from G2/M checkpoint arrest induced by a double strand break, by participating in monitoring the extent of single-stranded DNA produced by resection of DNA ends. This role is distinct from its roles in recombination. Promotes colocalization of RAD51 and DMC1 during meiotic recombination. Involved in crossover interference. In Saccharomyces cerevisiae (strain RM11-1a) (Baker's yeast), this protein is DNA repair and recombination protein RDH54 (RDH54).